Consider the following 89-residue polypeptide: Large ribosomal subunit protein bL27 (89 aa).

Belongs to the bacterial ribosomal protein bL27 family.

The protein is Large ribosomal subunit protein bL27 of Cereibacter sphaeroides (strain ATCC 17029 / ATH 2.4.9) (Rhodobacter sphaeroides).